Reading from the N-terminus, the 370-residue chain is MASTGLPQLPPSQKAVIQSEKTPGAFEVSENRPVPVPKANELIVKVSAVSLNHCDWKMPGRVPCPGAVDGADYSGTIVRMGEIAALKSGFQIGDRVAGAQMASSRRRPWAGAFTEYLRDEYDMVWKVPDNLSWEQAAAIGCATTSTVGMALWISMKLPGTPENPIKEPKLVLVYGGSTASGTFAIQLLKLSGYKVVTTCSPKNFKLVEEYGADKAFDYHSATCGEDIRAYTNNTLEYALDIITEARTIRHCYAAIGRGGGRYCGFELLPEDLIATMRKSVKAEWVMGLEMTGLEIDLPGGYYRKANPELHTWFCDWKERYVALFGSGKTKTHPITVRQGGLEKVIDGIESMRRREVSGEKIVYPLYIKGC.

Residues 1-32 are disordered; it reads MASTGLPQLPPSQKAVIQSEKTPGAFEVSENR. Residues 54–57, 177–180, 200–203, Tyr218, 265–266, and 356–357 contribute to the NADP(+) site; these read CDWK, STAS, SPKN, FE, and VS.

Belongs to the zinc-containing alcohol dehydrogenase family. Monomer.

It participates in mycotoxin biosynthesis. Trans-enoyl reductase; part of the gene cluster that mediates the biosynthesis of xenoacremones such as xenoacremone A, a compound that shows inhibitory activity toward the PI3K/AKT signaling pathway and which has the ability to induce apoptosis of A549 lung cancer cells. Within the pathway, cooperation of the hybrid PKS-NRPS xenE and the trans-acting enoyl reductase xenG is responsible for the formation of the reduced tyrosine-nonaketide derivative. The alpha/beta hydrolase xenA then accelerates intramolecular nucleophilic attack to give a pyrrolidone derivative. Subsequently, three enzymes, xenF, xenD, and xenC, coordinately participate in the conversion to xenoacremone B. XenF catalyzes sigmatropic rearrangement to form an A-ring, which leads to an unusual intermediate with a hexane ring, which is required for the formation of the tricarbocyclic product. Epoxidation catalyzed by xenD and the formation of the paracyclophane ether catalyzed by xenC initiate a spontaneous intramolecular Diels-Alder (IMDA) reaction to yield xenoacremone B. Spontaneous hydration of xenoacremone B leads to the formation of xenoacremone A, which undergoes subsequent methylation to afford xenoacremone C. In Xenoacremonium sinensis (Endophyte fungus), this protein is Trans-enoyl reductase xenG.